We begin with the raw amino-acid sequence, 241 residues long: UPF0173 metal-dependent hydrolase Haur_4333 (241 aa).

This sequence belongs to the UPF0173 family.

In Herpetosiphon aurantiacus (strain ATCC 23779 / DSM 785 / 114-95), this protein is UPF0173 metal-dependent hydrolase Haur_4333.